The following is an 88-amino-acid chain: Small ribosomal subunit protein bS16 (88 aa).

Belongs to the bacterial ribosomal protein bS16 family.

The protein is Small ribosomal subunit protein bS16 of Geobacter sp. (strain M21).